The chain runs to 368 residues: Putative flavoprotein monooxygenase (368 aa).

FAD is bound by residues A14, E34, S41, 52 to 53 (IT), V110, A307, and I319.

The cofactor is FAD.

FAD-binding protein that may have monooxygenase activity using NADPH and/or NADH as an electron donor. The polypeptide is Putative flavoprotein monooxygenase (Staphylococcus aureus (strain Mu50 / ATCC 700699)).